The primary structure comprises 512 residues: PTS system mannitol-specific EIICB component (512 aa).

At 1–28 the chain is on the cytoplasmic side; that stretch reads MSQTEEKKGIGRRVQAFGSFLSSMIMPN. In terms of domain architecture, PTS EIIC type-2 spans 17 to 349; it reads FGSFLSSMIM…MKFTREPKQD (333 aa). The chain crosses the membrane as a helical span at residues 29–50; sequence IGAFIAWGFIAAIFIDNGWLPN. Topologically, residues 51–54 are extracellular; it reads KDLA. Residues 55–75 form a helical membrane-spanning segment; sequence TLAGPMITYLIPLLIAFSGGR. The Cytoplasmic portion of the chain corresponds to 76–139; the sequence is LIYDLRGGII…QGFEMLFNNF (64 aa). A helical transmembrane segment spans residues 140 to 161; the sequence is SAGILGFIMTIAGFKILAPLMK. Over 162 to 170 the chain is Extracellular; that stretch reads FIMHILSVA. A helical membrane pass occupies residues 171 to 191; sequence VEALVHAHLLPLVSILVEPAK. The Cytoplasmic portion of the chain corresponds to 192 to 278; that stretch reads IVFLNNAINH…VLMRPLLFIA (87 aa). Residues 279–298 form a helical membrane-spanning segment; sequence VILGGMTGVATYQATGFGFK. Topologically, residues 299 to 318 are extracellular; sequence SPASPGSFIVYCLNAPRGEF. The chain crosses the membrane as a helical span at residues 319–340; the sequence is LHMLLGVFLAALVSFVVAALIM. Topologically, residues 341–512 are cytoplasmic; the sequence is KFTREPKQDL…LNNLKKDDQA (172 aa). A disordered region spans residues 355–402; that stretch reads AQMENTKGKKSSVASKLVSSDKNVNTEENASGNVSETSSSDDDPEALL. The segment covering 365–376 has biased composition (low complexity); it reads SSVASKLVSSDK. A compositionally biased stretch (polar residues) spans 380–392; it reads TEENASGNVSETS. A PTS EIIB type-2 domain is found at 419–512; the sequence is NHVIFACDAG…LNNLKKDDQA (94 aa). The active-site Phosphocysteine intermediate; for EIIB activity is the cysteine 425. The residue at position 425 (cysteine 425) is a Phosphocysteine; by EIIA.

Homodimer.

The protein resides in the cell membrane. It catalyses the reaction D-mannitol(out) + N(pros)-phospho-L-histidyl-[protein] = D-mannitol 1-phosphate(in) + L-histidyl-[protein]. Functionally, the phosphoenolpyruvate-dependent sugar phosphotransferase system (sugar PTS), a major carbohydrate active transport system, catalyzes the phosphorylation of incoming sugar substrates concomitantly with their translocation across the cell membrane. The enzyme II CmtAB PTS system is involved in D-mannitol transport. This Staphylococcus aureus (strain Mu50 / ATCC 700699) protein is PTS system mannitol-specific EIICB component (mtlA).